Here is a 411-residue protein sequence, read N- to C-terminus: MKILYLDCFSGISGDMMVGALVDAGVPSEKIEVELKKLSLSGYKLQWGKVVKKGISATKFDVIIQESIEGGHHHQSHHAHRHYSDIIDMIRRSELSEEVKQRAGQIFHCIAVAEAKIHGIPVENVHFHEVGAVDSIVDIVATAIALTELHIDYIISAPIPLGHGSIRCAHGVYPVPAPATLEILQGVPVVSNHLPFELTTPTGAGIVKSQVNSYGPLPSMKISAIGYGAGTRDLPDQPNVLRVVIGEETRITSSGPSLFHSKEETVYILECQLDDMPGEALGYVMDGLFQKGALDVFYTPVFMKKNRPGVLLTVLTSATHVEQCEQFMLKETTTLGIRKDIWVREVLERDVVTVATSYGNIRVKQAIHKGKVIRQMPEYEDVKEAALTHQVAFLDVYAEAAEQARRRIKGE.

This sequence belongs to the LarC family.

The enzyme catalyses Ni(II)-pyridinium-3,5-bisthiocarboxylate mononucleotide = pyridinium-3,5-bisthiocarboxylate mononucleotide + Ni(2+). In terms of biological role, involved in the biosynthesis of a nickel-pincer cofactor ((SCS)Ni(II) pincer complex). Binds Ni(2+), and functions in nickel delivery to pyridinium-3,5-bisthiocarboxylic acid mononucleotide (P2TMN), to form the mature cofactor. Is thus probably required for the activation of nickel-pincer cofactor-dependent enzymes. The polypeptide is Pyridinium-3,5-bisthiocarboxylic acid mononucleotide nickel insertion protein (Geobacillus kaustophilus (strain HTA426)).